The sequence spans 597 residues: Nuclear receptor subfamily 4 group A member 1 (597 aa).

The interval 1-22 (MPCIQAQYGTPATSPGPRDHLT) is disordered. Residues 170-465 (RVWTEQLPKA…PGEGKLIFCS (296 aa)) are required for nuclear import. Positions 263–338 (EGRCAVCGDN…VGMVKEVVRT (76 aa)) form a DNA-binding region, nuclear receptor. 2 consecutive NR C4-type zinc fingers follow at residues 266 to 286 (CAVCGDNASCQHYGVRTCEGC) and 302 to 326 (CLANKDCPVDKRRRNRCQFCRFQKC). The required for binding NBRE-containing DNA stretch occupies residues 267 to 353 (AVCGDNASCQ…RRGRLPSKPK (87 aa)). Positions 298-360 (AKYICLANKD…KPKQPPDASP (63 aa)) are required for the interaction with RXRA. A Phosphoserine; by PKA modification is found at S340. The segment at 341–360 (LKGRRGRLPSKPKQPPDASP) is disordered. Residue S350 is modified to Phosphoserine; by PKA, RPS6KA1 and RPS6KA3. In terms of domain architecture, NR LBD spans 359-594 (SPTNLLTSLI…PIVDKIFMDT (236 aa)). A binds lipopolysaccharide region spans residues 520–543 (PRRVEELQNRIASCLKEHMAAVAG). The AF-2 stretch occupies residues 583–594 (PPPIVDKIFMDT).

It belongs to the nuclear hormone receptor family. NR4 subfamily. As to quaternary structure, binds the NGFI-B response element (NBRE) as a monomer. Binds the Nur response element (NurRE), consisting of two inverse NBRE-related octanucleotide repeats separated by 6 base-pairs, as a dimer. Interacts (via N-terminus) with NLRP3 (via LRR repeat domain); the interaction is direct, requires binding of NR4A1/Nur77 to NBRE-containing dsDNA and lipopolysaccharide, and leads to non-canonical NLRP3 inflammasome activation. Interacts with GADD45GIP1. Interacts with STK11. Interacts with IFI27. Heterodimer (via DNA-binding domain) with RXRA (via C-terminus); DNA-binding of the heterodimer is enhanced by 9-cis retinoic acid. Competes for the RXRA interaction with EP300 and thereby attenuates EP300 mediated acetylation of RXRA. Interacts with NCOA1. Interacts with NCOA2. Interacts with NCOA3. Zn(2+) serves as cofactor. In terms of processing, phosphorylated at Ser-350 by RPS6KA1 and RPS6KA3 in response to mitogenic or stress stimuli. Phosphorylation of Ser-350 results in decrease in NBRE binding while phosphorylation of Ser-340 has little effect on it. Acetylated by p300/CBP, acetylation increases stability. Deacetylated by HDAC1. Expressed in lung, brain and superior cervical ganglia. High levels are seen in the adrenal tissue.

Its subcellular location is the nucleus. The protein resides in the cytoplasm. It localises to the cytosol. The protein localises to the mitochondrion. Its function is as follows. Orphan nuclear receptor. Binds the NGFI-B response element (NBRE) 5'-AAAGGTCA-3'. Binds 9-cis-retinoic acid outside of its ligand-binding (NR LBD) domain. Participates in energy homeostasis by sequestrating the kinase STK11 in the nucleus, thereby attenuating cytoplasmic AMPK activation. Regulates the inflammatory response in macrophages by regulating metabolic adaptations during inflammation, including repressing the transcription of genes involved in the citric acid cycle (TCA). Inhibits NF-kappa-B signaling by binding to low-affinity NF-kappa-B binding sites, such as at the IL2 promoter. May act concomitantly with NR4A2 in regulating the expression of delayed-early genes during liver regeneration. Plays a role in the vascular response to injury. In the cytosol, upon its detection of both bacterial lipopolysaccharide (LPS) and NBRE-containing mitochondrial DNA released by GSDMD pores during pyroptosis, it promotes non-canonical NLRP3 inflammasome activation by stimulating association of NLRP3 and NEK7. The polypeptide is Nuclear receptor subfamily 4 group A member 1 (Nr4a1) (Rattus norvegicus (Rat)).